Here is a 286-residue protein sequence, read N- to C-terminus: ATP phosphoribosyltransferase (286 aa).

It belongs to the ATP phosphoribosyltransferase family. Long subfamily. The cofactor is Mg(2+).

It is found in the cytoplasm. It catalyses the reaction 1-(5-phospho-beta-D-ribosyl)-ATP + diphosphate = 5-phospho-alpha-D-ribose 1-diphosphate + ATP. Its pathway is amino-acid biosynthesis; L-histidine biosynthesis; L-histidine from 5-phospho-alpha-D-ribose 1-diphosphate: step 1/9. Its activity is regulated as follows. Feedback inhibited by histidine. In terms of biological role, catalyzes the condensation of ATP and 5-phosphoribose 1-diphosphate to form N'-(5'-phosphoribosyl)-ATP (PR-ATP). Has a crucial role in the pathway because the rate of histidine biosynthesis seems to be controlled primarily by regulation of HisG enzymatic activity. This Arthrobacter sp. (strain FB24) protein is ATP phosphoribosyltransferase.